The following is a 77-amino-acid chain: Small ribosomal subunit protein bS16c (77 aa).

Belongs to the bacterial ribosomal protein bS16 family.

The protein resides in the plastid. It is found in the cyanelle. This is Small ribosomal subunit protein bS16c from Cyanophora paradoxa.